The following is a 328-amino-acid chain: Malate dehydrogenase (328 aa).

11–17 (GAAGQIG) is a binding site for NAD(+). Substrate-binding residues include Arg94 and Arg100. NAD(+)-binding positions include Asn107, Gln114, and 131–133 (VGN). Asn133 and Arg164 together coordinate substrate. Residue His189 is the Proton acceptor of the active site.

The protein belongs to the LDH/MDH superfamily. MDH type 2 family.

The enzyme catalyses (S)-malate + NAD(+) = oxaloacetate + NADH + H(+). Functionally, catalyzes the reversible oxidation of malate to oxaloacetate. This Stenotrophomonas maltophilia (strain R551-3) protein is Malate dehydrogenase.